The primary structure comprises 174 residues: NADH-quinone oxidoreductase subunit I (174 aa).

4Fe-4S ferredoxin-type domains follow at residues 61 to 91 and 103 to 132; these read LTVKKDGSLRCTACMLCATNCPAECIKITAA and ISYEIDILRCVFCGFCEEACPVDAIRLGPE. 8 residues coordinate [4Fe-4S] cluster: Cys-71, Cys-74, Cys-77, Cys-81, Cys-112, Cys-115, Cys-118, and Cys-122.

The protein belongs to the complex I 23 kDa subunit family. NDH-1 is composed of 14 different subunits. Subunits NuoA, H, J, K, L, M, N constitute the membrane sector of the complex. It depends on [4Fe-4S] cluster as a cofactor.

The protein localises to the cell inner membrane. The catalysed reaction is a quinone + NADH + 5 H(+)(in) = a quinol + NAD(+) + 4 H(+)(out). Its function is as follows. NDH-1 shuttles electrons from NADH, via FMN and iron-sulfur (Fe-S) centers, to quinones in the respiratory chain. The immediate electron acceptor for the enzyme in this species is believed to be ubiquinone. Couples the redox reaction to proton translocation (for every two electrons transferred, four hydrogen ions are translocated across the cytoplasmic membrane), and thus conserves the redox energy in a proton gradient. The protein is NADH-quinone oxidoreductase subunit I of Bdellovibrio bacteriovorus (strain ATCC 15356 / DSM 50701 / NCIMB 9529 / HD100).